Consider the following 488-residue polypeptide: NADH-ubiquinone oxidoreductase chain 4 (488 aa).

The next 14 membrane-spanning stretches (helical) occupy residues 1–21 (MFLL…IEGN), 34–54 (SIAL…FILF), 79–99 (VDGL…IAIL), 110–130 (VLSF…VFLV), 134–154 (LLFY…IGLF), 164–184 (FYLF…IVAM), 207–227 (LFLF…SFLN), 238–258 (PLSG…YGIF), 272–292 (YTYI…FSTL), 301–321 (IAYS…SNTI), 328–348 (IALG…AGGI), 367–387 (VMPI…GTPL), 407–427 (LLGV…IFMY), and 452–472 (FIML…PAPI).

The protein belongs to the complex I subunit 4 family.

The protein resides in the mitochondrion membrane. The catalysed reaction is a ubiquinone + NADH + 5 H(+)(in) = a ubiquinol + NAD(+) + 4 H(+)(out). Its function is as follows. Core subunit of the mitochondrial membrane respiratory chain NADH dehydrogenase (Complex I) that is believed to belong to the minimal assembly required for catalysis. Complex I functions in the transfer of electrons from NADH to the respiratory chain. The immediate electron acceptor for the enzyme is believed to be ubiquinone. This chain is NADH-ubiquinone oxidoreductase chain 4 (ND4), found in Aspergillus amstelodami.